The following is a 631-amino-acid chain: Squalene--hopene cyclase (631 aa).

PFTB repeat units lie at residues 15–56, 61–102, and 241–282; these read LDRA…LDRV, MEKI…KYIG, and EIRA…QHPA. Asp376 functions as the Proton donor in the catalytic mechanism. PFTB repeat units follow at residues 400–441, 468–508, 516–557, and 574–622; these read MTKG…GEVT, IRRA…KAVG, IQKA…SQTA, and ARRG…LALG.

The protein belongs to the terpene cyclase/mutase family. In terms of assembly, homodimer.

It localises to the cell membrane. The catalysed reaction is squalene = hop-22(29)-ene. It catalyses the reaction squalene + H2O = hopan-22-ol. The protein operates within secondary metabolite biosynthesis; hopanoid biosynthesis. Functionally, catalyzes the cyclization of squalene to two pentacyclic triterpenes, hop-22(29)-ene and hopan-22-ol (diplopterol); hopene and hopanol are formed at a constant ratio of 5:1. Is a key enzyme of hopanoid biosynthesis; hopanoids are components of the bacterial cytoplasmic membranes that play a vital role in stabilizing the membranes. This Alicyclobacillus acidocaldarius subsp. acidocaldarius (strain ATCC 27009 / DSM 446 / BCRC 14685 / JCM 5260 / KCTC 1825 / NBRC 15652 / NCIMB 11725 / NRRL B-14509 / 104-IA) (Bacillus acidocaldarius) protein is Squalene--hopene cyclase (shc).